The following is a 230-amino-acid chain: Sugar fermentation stimulation protein homolog (230 aa).

Belongs to the SfsA family.

This Clostridium kluyveri (strain NBRC 12016) protein is Sugar fermentation stimulation protein homolog.